The chain runs to 1096 residues: Carbamoyl phosphate synthase large chain (1096 aa).

Residues 1–402 (MPKRDDINSV…ALQKALRSLE (402 aa)) are carboxyphosphate synthetic domain. Residues Arg129, Arg169, Gly175, Gly176, Glu208, Ile210, Glu215, Gly241, Val242, His243, Gln285, and Glu299 each contribute to the ATP site. The ATP-grasp 1 domain maps to 133 to 328 (KDLVIESGAD…IAKIAAKLAI (196 aa)). Mg(2+)-binding residues include Gln285, Glu299, and Asn301. Positions 285, 299, and 301 each coordinate Mn(2+). The segment at 403–547 (KRGSSFHWGA…YSSYDSETEI (145 aa)) is oligomerization domain. Residues 548-950 (VPSDRRKVII…AFAKSQEAAF (403 aa)) are carbamoyl phosphate synthetic domain. In terms of domain architecture, ATP-grasp 2 spans 676 to 870 (SGILDAAGLV…LAKAASLVMV (195 aa)). Residues Arg712, Arg754, Leu756, Glu761, Gly786, Ile787, His788, Ser789, Gln829, and Glu841 each coordinate ATP. Mg(2+) is bound by residues Gln829, Glu841, and Asn843. Mn(2+) contacts are provided by Gln829, Glu841, and Asn843. The MGS-like domain maps to 951–1095 (GGLPLSGTVF…QDYAIAREAR (145 aa)). The tract at residues 951–1096 (GGLPLSGTVF…DYAIAREARR (146 aa)) is allosteric domain.

This sequence belongs to the CarB family. In terms of assembly, composed of two chains; the small (or glutamine) chain promotes the hydrolysis of glutamine to ammonia, which is used by the large (or ammonia) chain to synthesize carbamoyl phosphate. Tetramer of heterodimers (alpha,beta)4. Requires Mg(2+) as cofactor. It depends on Mn(2+) as a cofactor.

The catalysed reaction is hydrogencarbonate + L-glutamine + 2 ATP + H2O = carbamoyl phosphate + L-glutamate + 2 ADP + phosphate + 2 H(+). The enzyme catalyses hydrogencarbonate + NH4(+) + 2 ATP = carbamoyl phosphate + 2 ADP + phosphate + 2 H(+). Its pathway is amino-acid biosynthesis; L-arginine biosynthesis; carbamoyl phosphate from bicarbonate: step 1/1. It participates in pyrimidine metabolism; UMP biosynthesis via de novo pathway; (S)-dihydroorotate from bicarbonate: step 1/3. In terms of biological role, large subunit of the glutamine-dependent carbamoyl phosphate synthetase (CPSase). CPSase catalyzes the formation of carbamoyl phosphate from the ammonia moiety of glutamine, carbonate, and phosphate donated by ATP, constituting the first step of 2 biosynthetic pathways, one leading to arginine and/or urea and the other to pyrimidine nucleotides. The large subunit (synthetase) binds the substrates ammonia (free or transferred from glutamine from the small subunit), hydrogencarbonate and ATP and carries out an ATP-coupled ligase reaction, activating hydrogencarbonate by forming carboxy phosphate which reacts with ammonia to form carbamoyl phosphate. The chain is Carbamoyl phosphate synthase large chain from Clavibacter sepedonicus (Clavibacter michiganensis subsp. sepedonicus).